The sequence spans 109 residues: uncharacterized protein (109 aa).

The N-terminal stretch at 1–25 (MKGIFLVVQLGFSIMVFLFLAAVNW) is a signal peptide. Residues 73-95 (YPVMSALMIISFLYVLAALFLLI) traverse the membrane as a helical segment.

It is found in the membrane. This is an uncharacterized protein from Bacillus subtilis (strain 168).